The primary structure comprises 1059 residues: Ceruloplasmin (1059 aa).

The first 19 residues, 1 to 19 (MKFLLLSALLFLHSSLAWT), serve as a signal peptide directing secretion. 6 Plastocyanin-like domains span residues 20–199 (REKH…LILC), 208–356 (KEEN…VRDC), 369–554 (HVRH…MKIC), 564–712 (RQKD…VNQC), 724–894 (GERT…LIVC), and 902–1055 (FNPK…PNQE). Na(+) is bound by residues tyrosine 55, glycine 64, and tyrosine 67. Cu(2+)-binding residues include histidine 120 and histidine 122. Histidine 120 lines the O2 pocket. Lysine 128 contacts Ca(2+). The N-linked (GlcNAc...) asparagine glycan is linked to asparagine 138. 3 residues coordinate Ca(2+): glutamine 143, aspartate 146, and aspartate 147. A disulfide bridge links cysteine 173 with cysteine 199. Positions 179 and 181 each coordinate Cu(2+). Histidine 179 contacts O2. Asparagine 226 carries N-linked (GlcNAc...) asparagine glycosylation. Serine 255 contributes to the Na(+) binding site. Cysteines 275 and 356 form a disulfide. Residues histidine 294, cysteine 337, and histidine 342 each contribute to the Cu(2+) site. The N-linked (GlcNAc...) asparagine glycan is linked to asparagine 396. Phenylalanine 407, glycine 416, and tyrosine 419 together coordinate Na(+). Cysteine 528 and cysteine 554 form a disulfide bridge. N-linked (GlcNAc...) asparagine glycosylation occurs at asparagine 582. Serine 611 contacts Na(+). A disulfide bond links cysteine 631 and cysteine 712. 4 residues coordinate Cu(2+): histidine 650, cysteine 693, histidine 698, and methionine 703. The active-site Nucleophile; for glutathione peroxidase activity is cysteine 693. N-linked (GlcNAc...) asparagine glycosylation occurs at asparagine 756. Na(+) is bound by residues phenylalanine 761, glycine 770, and tyrosine 773. Cysteine 868 and cysteine 894 form a disulfide bridge. Asparagine 920 carries N-linked (GlcNAc...) asparagine glycosylation. Residue serine 949 coordinates Na(+). Positions 988, 991, 993, 1033, 1034, 1035, 1039, and 1044 each coordinate Cu(2+). 2 residues coordinate O2: histidine 991 and histidine 993. Residue histidine 1035 coordinates O2.

This sequence belongs to the multicopper oxidase family. In terms of assembly, found in a complex with MPO and LTF; interacts directly with MPO and LTF, which allows Fe(3+) incorporation into LTF, activation of CP ferroxidase activity and protection of CP antioxidant properties by MPO. Requires Cu(2+) as cofactor. As to expression, synthesized in liver and secreted into the plasma. Also choroid plexus, yolk sac, placenta, and testis; not in stomach and small intestine. Fetal lung and liver.

The protein localises to the secreted. The enzyme catalyses 4 Fe(2+) + O2 + 4 H(+) = 4 Fe(3+) + 2 H2O. It carries out the reaction 4 Cu(+) + O2 + 4 H(+) = 4 Cu(2+) + 2 H2O. The catalysed reaction is a hydroperoxide + 2 glutathione = an alcohol + glutathione disulfide + H2O. It catalyses the reaction 4 nitric oxide + O2 + 2 H2O = 4 nitrite + 4 H(+). The enzyme catalyses 2 glutathione + H2O2 = glutathione disulfide + 2 H2O. Functionally, multifunctional blue, copper-binding (6-7 atoms per molecule) glycoprotein. It has ferroxidase activity oxidizing Fe(2+) to Fe(3+) without releasing radical oxygen species. It is involved in iron transport across the cell membrane. Copper ions provide a large number of enzymatic activites. Oxidizes highly toxic ferrous ions to the ferric state for further incorporation onto apo-transferrins, catalyzes Cu(+) oxidation and promotes the oxidation of biogenic amines such as norepinephrin and serotonin. Provides Cu(2+) ions for the ascorbate-mediated deaminase degradation of the heparan sulfate chains of GPC1. Has glutathione peroxidase-like activity, can remove both hydrogen peroxide and lipid hydroperoxide in the presence of thiols. Also shows NO-oxidase and NO2 synthase activities that determine endocrine NO homeostasis. This chain is Ceruloplasmin (Cp), found in Rattus norvegicus (Rat).